The sequence spans 400 residues: Enoyl-[acyl-carrier-protein] reductase [NADH] (400 aa).

Residues 48–53 (GSSSGY), 74–75 (FE), 111–112 (DA), and 139–140 (LA) contribute to the NAD(+) site. A substrate-binding site is contributed by Y225. The Proton donor role is filled by Y235. NAD(+) contacts are provided by residues K244 and 273 to 275 (VVT).

It belongs to the TER reductase family. Monomer.

The enzyme catalyses a 2,3-saturated acyl-[ACP] + NAD(+) = a (2E)-enoyl-[ACP] + NADH + H(+). The protein operates within lipid metabolism; fatty acid biosynthesis. Functionally, involved in the final reduction of the elongation cycle of fatty acid synthesis (FAS II). Catalyzes the reduction of a carbon-carbon double bond in an enoyl moiety that is covalently linked to an acyl carrier protein (ACP). The chain is Enoyl-[acyl-carrier-protein] reductase [NADH] from Aliivibrio salmonicida (strain LFI1238) (Vibrio salmonicida (strain LFI1238)).